The chain runs to 105 residues: Large ribosomal subunit protein uL24 (105 aa).

Belongs to the universal ribosomal protein uL24 family. Part of the 50S ribosomal subunit.

In terms of biological role, one of two assembly initiator proteins, it binds directly to the 5'-end of the 23S rRNA, where it nucleates assembly of the 50S subunit. One of the proteins that surrounds the polypeptide exit tunnel on the outside of the subunit. The protein is Large ribosomal subunit protein uL24 of Xanthomonas axonopodis pv. citri (strain 306).